The sequence spans 51 residues: Large ribosomal subunit protein eL39 (51 aa).

Positions 1–22 are disordered; the sequence is MPSQKSFRTKQKLAKAQKQNRP.

This sequence belongs to the eukaryotic ribosomal protein eL39 family. As to quaternary structure, interacts with YIH1.

This is Large ribosomal subunit protein eL39 (RPL39) from Debaryomyces hansenii (strain ATCC 36239 / CBS 767 / BCRC 21394 / JCM 1990 / NBRC 0083 / IGC 2968) (Yeast).